We begin with the raw amino-acid sequence, 314 residues long: 4-hydroxy-3-methylbut-2-enyl diphosphate reductase (314 aa).

[4Fe-4S] cluster is bound at residue cysteine 12. (2E)-4-hydroxy-3-methylbut-2-enyl diphosphate-binding residues include histidine 41 and histidine 74. Positions 41 and 74 each coordinate dimethylallyl diphosphate. Residues histidine 41 and histidine 74 each coordinate isopentenyl diphosphate. [4Fe-4S] cluster is bound at residue cysteine 96. Histidine 124 is a (2E)-4-hydroxy-3-methylbut-2-enyl diphosphate binding site. Residue histidine 124 coordinates dimethylallyl diphosphate. Position 124 (histidine 124) interacts with isopentenyl diphosphate. Catalysis depends on glutamate 126, which acts as the Proton donor. Residue threonine 167 coordinates (2E)-4-hydroxy-3-methylbut-2-enyl diphosphate. Cysteine 197 provides a ligand contact to [4Fe-4S] cluster. Serine 225, serine 226, asparagine 227, and serine 269 together coordinate (2E)-4-hydroxy-3-methylbut-2-enyl diphosphate. 4 residues coordinate dimethylallyl diphosphate: serine 225, serine 226, asparagine 227, and serine 269. Residues serine 225, serine 226, asparagine 227, and serine 269 each contribute to the isopentenyl diphosphate site.

Belongs to the IspH family. Requires [4Fe-4S] cluster as cofactor.

The enzyme catalyses isopentenyl diphosphate + 2 oxidized [2Fe-2S]-[ferredoxin] + H2O = (2E)-4-hydroxy-3-methylbut-2-enyl diphosphate + 2 reduced [2Fe-2S]-[ferredoxin] + 2 H(+). It carries out the reaction dimethylallyl diphosphate + 2 oxidized [2Fe-2S]-[ferredoxin] + H2O = (2E)-4-hydroxy-3-methylbut-2-enyl diphosphate + 2 reduced [2Fe-2S]-[ferredoxin] + 2 H(+). It participates in isoprenoid biosynthesis; dimethylallyl diphosphate biosynthesis; dimethylallyl diphosphate from (2E)-4-hydroxy-3-methylbutenyl diphosphate: step 1/1. Its pathway is isoprenoid biosynthesis; isopentenyl diphosphate biosynthesis via DXP pathway; isopentenyl diphosphate from 1-deoxy-D-xylulose 5-phosphate: step 6/6. Its function is as follows. Catalyzes the conversion of 1-hydroxy-2-methyl-2-(E)-butenyl 4-diphosphate (HMBPP) into a mixture of isopentenyl diphosphate (IPP) and dimethylallyl diphosphate (DMAPP). Acts in the terminal step of the DOXP/MEP pathway for isoprenoid precursor biosynthesis. This is 4-hydroxy-3-methylbut-2-enyl diphosphate reductase from Psychromonas ingrahamii (strain DSM 17664 / CCUG 51855 / 37).